A 207-amino-acid polypeptide reads, in one-letter code: Interleukin-6 (207 aa).

The signal sequence occupies residues 1–20; sequence MNSLSTSAFSLGLLLVMATA. A disulfide bridge connects residues cysteine 67 and cysteine 73. Position 76 is a phosphoserine (serine 76). Cysteine 96 and cysteine 106 are oxidised to a cystine.

It belongs to the IL-6 superfamily. Component of a hexamer of two molecules each of IL6, IL6R and IL6ST; first binds to IL6R to associate with the signaling subunit IL6ST. Interacts with IL6R (via the N-terminal ectodomain); this interaction may be affected by IL6R-binding with SORL1, hence decreasing IL6 cis signaling. Interacts with SORL1 (via the N-terminal ectodomain); this interaction leads to IL6 internalization and lysosomal degradation. May form a trimeric complex with the soluble SORL1 ectodomain and soluble IL6R receptor; this interaction might stabilize circulating IL6, hence promoting IL6 trans signaling.

It localises to the secreted. Its function is as follows. Cytokine with a wide variety of biological functions in immunity, tissue regeneration, and metabolism. Binds to IL6R, then the complex associates to the signaling subunit IL6ST/gp130 to trigger the intracellular IL6-signaling pathway. The interaction with the membrane-bound IL6R and IL6ST stimulates 'classic signaling', whereas the binding of IL6 and soluble IL6R to IL6ST stimulates 'trans-signaling'. Alternatively, 'cluster signaling' occurs when membrane-bound IL6:IL6R complexes on transmitter cells activate IL6ST receptors on neighboring receiver cells. In terms of biological role, IL6 is a potent inducer of the acute phase response. Rapid production of IL6 contributes to host defense during infection and tissue injury, but excessive IL6 synthesis is involved in disease pathology. In the innate immune response, is synthesized by myeloid cells, such as macrophages and dendritic cells, upon recognition of pathogens through toll-like receptors (TLRs) at the site of infection or tissue injury. In the adaptive immune response, is required for the differentiation of B cells into immunoglobulin-secreting cells. Plays a major role in the differentiation of CD4(+) T cell subsets. Essential factor for the development of T follicular helper (Tfh) cells that are required for the induction of germinal-center formation. Required to drive naive CD4(+) T cells to the Th17 lineage. Also required for proliferation of myeloma cells and the survival of plasmablast cells. Functionally, acts as an essential factor in bone homeostasis and on vessels directly or indirectly by induction of VEGF, resulting in increased angiogenesis activity and vascular permeability. Induces, through 'trans-signaling' and synergistically with IL1B and TNF, the production of VEGF. Involved in metabolic controls, is discharged into the bloodstream after muscle contraction increasing lipolysis and improving insulin resistance. 'Trans-signaling' in central nervous system also regulates energy and glucose homeostasis. Mediates, through GLP-1, crosstalk between insulin-sensitive tissues, intestinal L cells and pancreatic islets to adapt to changes in insulin demand. Also acts as a myokine. Plays a protective role during liver injury, being required for maintenance of tissue regeneration. Also has a pivotal role in iron metabolism by regulating HAMP/hepcidin expression upon inflammation or bacterial infection. Through activation of IL6ST-YAP-NOTCH pathway, induces inflammation-induced epithelial regeneration. In Vulpes vulpes (Red fox), this protein is Interleukin-6 (IL6).